We begin with the raw amino-acid sequence, 147 residues long: UPF0735 ACT domain-containing protein RBAM_024960 (147 aa).

The ACT domain occupies T70–S145.

Belongs to the UPF0735 family.

This is UPF0735 ACT domain-containing protein RBAM_024960 from Bacillus velezensis (strain DSM 23117 / BGSC 10A6 / LMG 26770 / FZB42) (Bacillus amyloliquefaciens subsp. plantarum).